The chain runs to 261 residues: tRNA (guanine-N(1)-)-methyltransferase (261 aa).

S-adenosyl-L-methionine-binding positions include Gly-113 and 133–138; that span reads IGDYVL.

Belongs to the RNA methyltransferase TrmD family. Homodimer.

It localises to the cytoplasm. It carries out the reaction guanosine(37) in tRNA + S-adenosyl-L-methionine = N(1)-methylguanosine(37) in tRNA + S-adenosyl-L-homocysteine + H(+). Specifically methylates guanosine-37 in various tRNAs. The protein is tRNA (guanine-N(1)-)-methyltransferase of Xylella fastidiosa (strain M23).